The following is a 186-amino-acid chain: MRKSEIERETKETYVKILLNLDGSGSFLGDFPVPYYKHLFSAFCFYAEWDVEIMAKGDVEVDPHHLIEDTGIVWGKAFYSAVSNSNFLRFSSKIVPMDEALVMAVVDISGRPYLEIRDDKGILNGRLIKEFLRGFVNNSQITLHIWLLSGENLHHIEEAIFKALGLALGEASKEVPNLKSTKGKIW.

Belongs to the imidazoleglycerol-phosphate dehydratase family.

The protein localises to the cytoplasm. It catalyses the reaction D-erythro-1-(imidazol-4-yl)glycerol 3-phosphate = 3-(imidazol-4-yl)-2-oxopropyl phosphate + H2O. The protein operates within amino-acid biosynthesis; L-histidine biosynthesis; L-histidine from 5-phospho-alpha-D-ribose 1-diphosphate: step 6/9. The protein is Imidazoleglycerol-phosphate dehydratase of Dictyoglomus turgidum (strain DSM 6724 / Z-1310).